An 8886-amino-acid polypeptide reads, in one-letter code: Obscurin (8886 aa).

Ig-like domains are found at residues 9 to 99 (PRFL…LRVD), 109 to 201 (PHFL…LVVD), 234 to 320 (PPSP…QTYS), and 329 to 415 (PTVP…AELS). C30 and C81 are joined by a disulfide. Positions 135-165 (SPQPAVSWSKDGRRLGPPDAPHVRVEEHGES) are disordered. Residues 144 to 164 (KDGRRLGPPDAPHVRVEEHGE) are compositionally biased toward basic and acidic residues. Cystine bridges form between C257/C309 and C352/C402. A Phosphoserine modification is found at S393. One can recognise a Fibronectin type-III 1 domain in the interval 513–610 (PPADPVVKAK…FPGTMHLVPM (98 aa)). 43 consecutive Ig-like domains span residues 702–793 (PSSK…QDIT), 859–951 (PKLV…VAEP), 951–1043 (PKLV…VAEP), 1043–1135 (PKMV…VTEP), 1135–1227 (PKLV…VAEP), 1227–1319 (PKLV…VTEP), 1319–1407 (PKLV…FRLD), 1411–1503 (PKLV…VAEP), 1503–1595 (PKLV…VAEP), 1595–1687 (PKLA…VAEP), 1687–1779 (PKLA…VAEP), 1779–1871 (PKLA…VAEP), 1871–1963 (PKLM…VAEP), 1963–2051 (PKLV…FRLD), 2055–2147 (TRLM…VAEA), 2152–2241 (PERP…EEVA), 2242–2325 (AKFS…ARLT), 2329–2415 (PRVV…AALR), 2420–2504 (PVLF…AKLN), 2598–2681 (PVSF…ASLR), 2721–2812 (PVTL…QSIT), 2900–2984 (PVVL…AEVT), 3078–3162 (PVVF…SKVS), 3258–3342 (PVDI…AKLC), 3348–3431 (NRFT…ARLL), 3527–3610 (PSIF…SSIV), 3616–3700 (PVRF…ATLT), 3785–3876 (ATLT…ATLT), 3881–3964 (PAKF…ATLT), 4042–4125 (PTKF…ATLS), 4130–4213 (PSRF…ATLS), 4219–4301 (PRFI…ATLN), 4307–4389 (PRFI…AVLT), 4395–4477 (PKFT…ATLS), 4483–4565 (PRFI…ATLS), 4571–4653 (PRFI…ATLS), 4659–4741 (PRFI…ATLS), 4746–4829 (PAKF…ATLS), 4833–4916 (PQVV…TSAT), 4923–5007 (PVRF…ARLS), 5013–5105 (PKFK…PEVT), 5378–5464 (LEVL…ARLS), and 5557–5659 (PQMV…TFNV). Disulfide bonds link C885–C935, C977–C1027, C1069–C1119, C1161–C1211, C1253–C1303, C1345–C1395, C1437–C1487, C1529–C1579, C1621–C1671, C1713–C1763, C1805–C1855, C1897–C1947, C1989–C2039, and C2081–C2131. The cysteines at positions 2263 and 2313 are disulfide-linked. 8 cysteine pairs are disulfide-bonded: C2620–C2669, C2743–C2793, C2922–C2972, C3100–C3150, C3280–C3330, C3369–C3419, C3549–C3599, and C3638–C3688. S3321 carries the phosphoserine modification. At S3802 the chain carries Phosphoserine. Disulfide bonds link C3815/C3864, C3903/C3952, C4064/C4113, C4152/C4201, C4240/C4289, C4328/C4377, C4416/C4465, C4504/C4553, C4592/C4641, C4680/C4729, C4768/C4817, C4856/C4906, C4945/C4995, and C5034/C5086. S4960 carries the phosphoserine modification. In terms of domain architecture, Fibronectin type-III 2 spans 5471 to 5569 (PPEDAEVVGR…VKIAPAPAPA (99 aa)). A disulfide bridge connects residues C5590 and C5643. Phosphoserine is present on S5699. Residues 5700-5736 (REPTLDSISELPEEDSRVQHLRQEAEETAPDLSEGYS) are disordered. Phosphothreonine is present on T5703. S5706 carries the post-translational modification Phosphoserine. Residues 5713–5724 (EDSRVQHLRQEA) are compositionally biased toward basic and acidic residues. A Phosphothreonine modification is found at T5737. S5754 is modified (phosphoserine). The region spanning 5821–5850 (LDKAAVKIQAAFKGYKVRKEMKQQEGPVFS) is the IQ domain. One can recognise an Ig-like 48 domain in the interval 5847-5930 (PVFSRTFGDT…QVSTKSGRVS (84 aa)). A disulfide bridge links C5868 with C5920. A disordered region spans residues 5977-5996 (EEELFLSADEGPGEPEEPAD). Ig-like domains lie at 6077–6166 (PVFL…AELR), 6209–6298 (PQVL…ARLL), and 6320–6416 (PRIL…LHIS). A disulfide bridge connects residues C6098 and C6150. The segment at 6504-6546 (KLQVPGGDSDEETKTPSASPRHGRSRPSSSVQESSSESEDGDS) is disordered. S6512 is modified (phosphoserine). T6518 carries the phosphothreonine modification. The segment covering 6519-6538 (PSASPRHGRSRPSSSVQESS) has biased composition (low complexity). S6520 and S6522 each carry phosphoserine. Positions 6549–6616 (EIFDIYVVTA…SPAYLDKRLK (68 aa)) constitute an SH3 domain. Residues 6642-6826 (RLSSVIQELL…SALPQRAENK (185 aa)) enclose the DH domain. The 110-residue stretch at 6844–6953 (EPIRQGHFIV…WVKEICGIQQ (110 aa)) folds into the PH domain. R6924 contacts a 1,2-diacyl-sn-glycero-3-phospho-(1D-myo-inositol-4,5-bisphosphate). R6929 contacts a 1,2-diacyl-sn-glycero-3-phospho-(1D-myo-inositol-3,4-bisphosphate). Ig-like domains are found at residues 6963–7046 (PEFE…GNAS) and 7057–7147 (PRFV…GELY). Cystine bridges form between C6984-C7036 and C7078-C7131. The interval 7200–7257 (ALGPSPGDLPNTRQSEPPAFEEAASQIPGAASGTPEVSQPGTHKGLEQETTSSGSQGW) is disordered. Over residues 7247 to 7257 (QETTSSGSQGW) the composition is skewed to polar residues. The Ig-like 54 domain occupies 7306-7394 (PSMQVTIEDV…GQVLCKAELL (89 aa)). The region spanning 7416–7669 (YDVQEEIGRG…TSQCLAHPWF (254 aa)) is the Protein kinase 1 domain. ATP contacts are provided by residues 7422 to 7430 (IGRGVFGFV) and K7445. Residue D7535 is the Proton acceptor of the active site. Disordered regions lie at residues 7717-7810 (GPPD…SPGC), 7879-8106 (EQAS…TTRK), and 8150-8180 (SSEE…VPLR). S7779 is modified (phosphoserine). Residues 7793 to 7804 (AAVPASPQSAGP) are compositionally biased toward low complexity. A compositionally biased stretch (basic and acidic residues) spans 7941-7952 (TTAKDRGHKEGF). Positions 7986–7996 (SCHSELGSGSQ) are enriched in polar residues. Low complexity-rich tracts occupy residues 8000–8014 (GPPS…PPQS) and 8053–8073 (GSLS…ASQV). The residue at position 8161 (S8161) is a Phosphoserine. Residues 8380-8464 (KGRDQELSDE…VSNPLGTAVT (85 aa)) enclose the Ig-like 55 domain. A disulfide bridge connects residues C8401 and C8453. One can recognise a Fibronectin type-III 3 domain in the interval 8474–8566 (PSSSPRPEVG…PSEQVLLGGP (93 aa)). The 253-residue stretch at 8590–8842 (FAFQMQIRRG…ASTCLQCGWL (253 aa)) folds into the Protein kinase 2 domain. Residues 8596–8604 (IRRGRFSVV) and K8619 contribute to the ATP site. D8709 serves as the catalytic Proton acceptor.

It belongs to the protein kinase superfamily. CAMK Ser/Thr protein kinase family. In terms of assembly, interacts (via protein kinase domain 1) with CDH2 and (via protein kinase domain 1) with ATP1B1. Isoform 2 is found in a complex with DSG2, DESM, GJA1, CDH2 and VCL. Isoform 3 is found in a complex with DSG2, DESM, GJA1, CDH2, ANK3 and VCL. The cofactor is Mg(2+). Autophosphorylated by protein kinase domain 1 and 2. Post-translationally, two small isoforms, one probably containing protein kinase domain 2 and a partial protein kinase domain 1 and one containing only protein kinase domain 2, are glycosylated. Expressed in skeletal muscles including flexor digitorum brevis (FDB), soleus and tibialis anterior muscles, and to a lesser extent in heart muscles (at protein level). Isoform 2 and isoform 3 are expressed in the myocardium (at protein level).

The protein localises to the cytoplasm. It localises to the myofibril. The protein resides in the sarcomere. It is found in the m line. Its subcellular location is the z line. The protein localises to the cell membrane. It localises to the sarcolemma. The protein resides in the nucleus. It is found in the secreted. The catalysed reaction is L-seryl-[protein] + ATP = O-phospho-L-seryl-[protein] + ADP + H(+). It catalyses the reaction L-threonyl-[protein] + ATP = O-phospho-L-threonyl-[protein] + ADP + H(+). Its function is as follows. Structural component of striated muscles which plays a role in myofibrillogenesis. Probably involved in the assembly of myosin into sarcomeric A bands in striated muscle. Has serine/threonine protein kinase activity and phosphorylates N-cadherin CDH2 and sodium/potassium-transporting ATPase subunit ATP1B1. Binds (via the PH domain) strongly to phosphatidylinositol 3,4-bisphosphate (PtdIns(3,4)P2) and phosphatidylinositol 4,5-bisphosphate (PtdIns(4,5)P2), and to a lesser extent to phosphatidylinositol 3-phosphate (PtdIns(3)P), phosphatidylinositol 4-phosphate (PtdIns(4)P), phosphatidylinositol 5-phosphate (PtdIns(5)P) and phosphatidylinositol 3,4,5-trisphosphate (PtdIns(3,4,5)P3). In terms of biological role, isoform 2 and isoform 3: bind phosphatidylinositol bisphosphates (PIP2s) via their PH domains and negatively regulate the PI3K/AKT/mTOR signaling pathway, thus contributing to the regulation of cardiomyocyte size and adhesion. The protein is Obscurin of Mus musculus (Mouse).